The primary structure comprises 238 residues: MQLPALQSAKLIRRYKRFLADIELPTGDVMTIHCANTGAMTGCGEKGDTIWYSHSDSQTRKYPHSWELTQLANGQLCCINTHRSNQLVFEALQNKQIKELAMYDEIYPEVKYGEENSRIDFLLKGEGLPDCYVEVKSITLVKGNLGMFPDAVTTRGQKHVRELLAMKKQGHRAVVLFAGLHNGFDRFKIAEYIDPEYDRLLKEAMEQGVEAYAYAGQFEISNEIPTALSLTESVPYIK.

It belongs to the SfsA family.

This Haemophilus influenzae (strain 86-028NP) protein is Sugar fermentation stimulation protein homolog.